The chain runs to 315 residues: 4-diphosphocytidyl-2-C-methyl-D-erythritol kinase (315 aa).

Lysine 26 is an active-site residue. An ATP-binding site is contributed by proline 111–alanine 121. The active site involves aspartate 153.

It belongs to the GHMP kinase family. IspE subfamily.

The enzyme catalyses 4-CDP-2-C-methyl-D-erythritol + ATP = 4-CDP-2-C-methyl-D-erythritol 2-phosphate + ADP + H(+). It participates in isoprenoid biosynthesis; isopentenyl diphosphate biosynthesis via DXP pathway; isopentenyl diphosphate from 1-deoxy-D-xylulose 5-phosphate: step 3/6. Catalyzes the phosphorylation of the position 2 hydroxy group of 4-diphosphocytidyl-2C-methyl-D-erythritol. This Salinispora tropica (strain ATCC BAA-916 / DSM 44818 / JCM 13857 / NBRC 105044 / CNB-440) protein is 4-diphosphocytidyl-2-C-methyl-D-erythritol kinase.